We begin with the raw amino-acid sequence, 211 residues long: 3,4-dihydroxy-2-butanone 4-phosphate synthase (211 aa).

D-ribulose 5-phosphate is bound by residues 37-38 (RE), D42, 150-154 (RGGHT), and E174. E38 contributes to the Mg(2+) binding site. H153 contributes to the Mg(2+) binding site.

This sequence belongs to the DHBP synthase family. As to quaternary structure, homodimer. It depends on Mg(2+) as a cofactor. The cofactor is Mn(2+).

It carries out the reaction D-ribulose 5-phosphate = (2S)-2-hydroxy-3-oxobutyl phosphate + formate + H(+). The protein operates within cofactor biosynthesis; riboflavin biosynthesis; 2-hydroxy-3-oxobutyl phosphate from D-ribulose 5-phosphate: step 1/1. Catalyzes the conversion of D-ribulose 5-phosphate to formate and 3,4-dihydroxy-2-butanone 4-phosphate. This Baumannia cicadellinicola subsp. Homalodisca coagulata protein is 3,4-dihydroxy-2-butanone 4-phosphate synthase.